We begin with the raw amino-acid sequence, 65 residues long: Large ribosomal subunit protein bL35 (65 aa).

Residues 1–16 (MPKQKTHRASAKRFKR) are compositionally biased toward basic residues. The disordered stretch occupies residues 1-20 (MPKQKTHRASAKRFKRTGSG).

Belongs to the bacterial ribosomal protein bL35 family.

This Streptococcus pyogenes serotype M1 protein is Large ribosomal subunit protein bL35.